The chain runs to 352 residues: Transcription factor RSL2 (352 aa).

The segment covering S160–G169 has biased composition (polar residues). The segment at S160–Q277 is disordered. Basic residues predominate over residues K183–Q192. Over residues S223–C232 the composition is skewed to polar residues. Residues A272 to R285 form a basic motif region. The 50-residue stretch at A272–L321 folds into the bHLH domain. The interval E286–L321 is helix-loop-helix motif.

In terms of assembly, homodimer. Expressed in roots. Expressed in root epidermal hair cells.

It is found in the nucleus. Its function is as follows. Transcription factor involved in the regulation of root hair elongation. Does not seem to be a direct transcriptional target of RHD6 and RSL1. Involved in the regulation of root hair elongation in response to low phosphate. This chain is Transcription factor RSL2, found in Arabidopsis thaliana (Mouse-ear cress).